A 361-amino-acid polypeptide reads, in one-letter code: Phosphate acyltransferase (361 aa).

Residues Val340–Thr361 are disordered.

The protein belongs to the PlsX family. In terms of assembly, homodimer. Probably interacts with PlsY.

It is found in the cytoplasm. The catalysed reaction is a fatty acyl-[ACP] + phosphate = an acyl phosphate + holo-[ACP]. The protein operates within lipid metabolism; phospholipid metabolism. Its function is as follows. Catalyzes the reversible formation of acyl-phosphate (acyl-PO(4)) from acyl-[acyl-carrier-protein] (acyl-ACP). This enzyme utilizes acyl-ACP as fatty acyl donor, but not acyl-CoA. In Anaeromyxobacter dehalogenans (strain 2CP-1 / ATCC BAA-258), this protein is Phosphate acyltransferase.